The primary structure comprises 512 residues: Acid-sensing ion channel 2 (512 aa).

Over 1–42 the chain is Cytoplasmic; the sequence is MDLKESPSEGSLQPSSIQIFANTSTLHGIRHIFVYGPLTIRR. Serine 8 and serine 11 each carry phosphoserine. The helical transmembrane segment at 43 to 64 threads the bilayer; it reads VLWAVAFVGSLGLLLVESSERV. Residues 65-424 are Extracellular-facing; that stretch reads SYYFSYQHVT…ETIEQKKAYE (360 aa). 6 disulfides stabilise this stretch: cysteine 92/cysteine 193, cysteine 289/cysteine 364, cysteine 307/cysteine 360, cysteine 311/cysteine 358, cysteine 320/cysteine 342, and cysteine 322/cysteine 334. Residues asparagine 365 and asparagine 392 are each glycosylated (N-linked (GlcNAc...) asparagine). Residues 425 to 439 form a helical membrane-spanning segment; the sequence is VAALLGDIGGQMGLF. The Cytoplasmic segment spans residues 440-512; the sequence is IGASILTILE…TLGTLEEIAC (73 aa). The GAS motif; ion selectivity filter signature appears at 441 to 443; it reads GAS.

It belongs to the amiloride-sensitive sodium channel (TC 1.A.6) family. ASIC2 subfamily. In terms of assembly, can form homotrimers. Heterotrimer; forms functional heterotrimers producing channel with different properties. Forms heterotrimers with ASIC1; while ASIC1 determines current amplitude, ASIC2 influences the properties of the current. Forms heterotrimers with ASIC3; resulting in channels with distinct properties. Interacts with STOM; STOM regulates the gating of ASIC2-containing channels. Interacts with PICK1; promotes ASIC3 phosphorylation by PKC and activation of ASIC2/ASIC3 heterotrimers. In terms of tissue distribution, expressed in brain, cerebellum, trigeminal sensory ganglia and also detected in testis.

It is found in the cell membrane. The enzyme catalyses Na(+)(in) = Na(+)(out). It carries out the reaction K(+)(in) = K(+)(out). The catalysed reaction is Li(+)(in) = Li(+)(out). Inhibited by the diuretic drug amiloride. Inhibited by gadolinium ions, the heterotrimer with ASIC3 being more sensitive. Heterotrimer composed of ASIC1 and ASIC2 are inhibited by the snake venom mambalgin-1. Functionally, forms pH-gated trimeric sodium channels that act as postsynaptic excitatory sensors in the nervous system. Upon extracellular acidification, these channels generate rapid, transient inward currents that fully desensitize. Highly selective for sodium, they are permeable to other cations. By forming heterotrimeric channels with ASIC1, could contribute to synaptic plasticity, learning, and memory. Additionally, as acid sensors at nerve terminals, plays a role in mechanosensation and phototransduction. In Homo sapiens (Human), this protein is Acid-sensing ion channel 2.